The sequence spans 148 residues: UPF0178 protein CA_C2825 (148 aa).

This sequence belongs to the UPF0178 family.

This is UPF0178 protein CA_C2825 from Clostridium acetobutylicum (strain ATCC 824 / DSM 792 / JCM 1419 / IAM 19013 / LMG 5710 / NBRC 13948 / NRRL B-527 / VKM B-1787 / 2291 / W).